We begin with the raw amino-acid sequence, 248 residues long: 2,3-bisphosphoglycerate-dependent phosphoglycerate mutase (248 aa).

Residues 8 to 15 (RHGESQWN), 21 to 22 (TG), arginine 60, 87 to 90 (ERHY), lysine 98, 114 to 115 (RR), and 183 to 184 (GN) contribute to the substrate site. The Tele-phosphohistidine intermediate role is filled by histidine 9. Catalysis depends on glutamate 87, which acts as the Proton donor/acceptor.

Belongs to the phosphoglycerate mutase family. BPG-dependent PGAM subfamily. As to quaternary structure, homodimer.

The catalysed reaction is (2R)-2-phosphoglycerate = (2R)-3-phosphoglycerate. It participates in carbohydrate degradation; glycolysis; pyruvate from D-glyceraldehyde 3-phosphate: step 3/5. In terms of biological role, catalyzes the interconversion of 2-phosphoglycerate and 3-phosphoglycerate. In Alteromonas mediterranea (strain DSM 17117 / CIP 110805 / LMG 28347 / Deep ecotype), this protein is 2,3-bisphosphoglycerate-dependent phosphoglycerate mutase.